Reading from the N-terminus, the 541-residue chain is Membrane protein insertase YidC (541 aa).

The next 5 helical transmembrane spans lie at leucine 7–tyrosine 27, leucine 345–tyrosine 365, leucine 415–phenylalanine 435, leucine 453–leucine 473, and phenylalanine 492–tryptophan 512.

Belongs to the OXA1/ALB3/YidC family. Type 1 subfamily. Interacts with the Sec translocase complex via SecD. Specifically interacts with transmembrane segments of nascent integral membrane proteins during membrane integration.

The protein resides in the cell inner membrane. In terms of biological role, required for the insertion and/or proper folding and/or complex formation of integral membrane proteins into the membrane. Involved in integration of membrane proteins that insert both dependently and independently of the Sec translocase complex, as well as at least some lipoproteins. Aids folding of multispanning membrane proteins. The sequence is that of Membrane protein insertase YidC from Histophilus somni (strain 129Pt) (Haemophilus somnus).